We begin with the raw amino-acid sequence, 264 residues long: MYVTKYKNKLPTLQVDLIIMPHQTQACIYKQTLSLHQIFQQRKATKTLHTKKTMMSKKKESIGRQKIPMVKIKKESHRQVTFSKRRAGLFKKASELCTLCGAEIGIIVFSPAKKPFSFGHPSVESVLDRYVSRNNMSLAQSQQLQGSPAASCELNMQLTHILSEVEEEKKKGQAMEEMRKESVRRSMINWWEKPVEEMNMVQLQEMKYALEELRKTVVTNMASFNEAKDDVFGFLDNKVTVPPYVNMPSGPSNIYNFANGNGCF.

The 61-residue stretch at 62–122 (IGRQKIPMVK…KKPFSFGHPS (61 aa)) folds into the MADS-box domain.

In terms of assembly, interacts with PHE1/AGL37, PHE2/AGL38, AGL80 and AGL86. Forms a heterodimer with AGL80. As to expression, expressed exclusively in the central cell of the female gametophyte and in early endosperm.

Its subcellular location is the nucleus. In terms of biological role, probable transcription factor. Controls central cell differentiation during female gametophyte development. The sequence is that of Agamous-like MADS-box protein AGL61 (AGL61) from Arabidopsis thaliana (Mouse-ear cress).